The following is a 553-amino-acid chain: CDP-diacylglycerol--glycerol-3-phosphate 3-phosphatidyltransferase, mitochondrial (553 aa).

Residues 1–25 constitute a mitochondrion transit peptide; that stretch reads MAAPAAGPVFWRRLLGLLPGRPGLA. Residue Ser-46 is modified to Phosphoserine. 121–128 is a binding site for ATP; that stretch reads ASLYLGTG. PLD phosphodiesterase domains follow at residues 212–238 and 457–490; these read TIGLQHIKVYLFDNNVILSGANLSDSY and RGWTFHAKGLWLYLAGSSLPCLTLIGSPNFGYRS. Active-site residues include His-217, Lys-219, and Asp-224.

The protein belongs to the CDP-alcohol phosphatidyltransferase class-II family. Widely expressed with higher expression in testis, liver and brain.

The protein resides in the mitochondrion. It carries out the reaction a CDP-1,2-diacyl-sn-glycerol + sn-glycerol 3-phosphate = a 1,2-diacyl-sn-glycero-3-phospho-(1'-sn-glycero-3'-phosphate) + CMP + H(+). Its pathway is phospholipid metabolism; phosphatidylglycerol biosynthesis; phosphatidylglycerol from CDP-diacylglycerol: step 1/2. Activated by calcium and magnesium and inhibited by other bivalent cations. Its function is as follows. Functions in the biosynthesis of the anionic phospholipids phosphatidylglycerol and cardiolipin. This Mus musculus (Mouse) protein is CDP-diacylglycerol--glycerol-3-phosphate 3-phosphatidyltransferase, mitochondrial (Pgs1).